The chain runs to 456 residues: Gustatory receptor for sugar taste 64a (456 aa).

Positions 1 to 30 are disordered; the sequence is MKGPNLNFRKTPSKDNGVKQVESLARPETP. At 1–91 the chain is on the cytoplasmic side; that stretch reads MKGPNLNFRK…RESNPRRVRF (91 aa). The helical transmembrane segment at 92–114 threads the bilayer; the sequence is AYKSIPMFVTLIFMIATSILFLS. The Extracellular portion of the chain corresponds to 115 to 128; that stretch reads MFTHLLKIGITAKN. A helical membrane pass occupies residues 129-150; sequence FVGLVFFGCVLSAYVVFIRLAK. Residue G131 coordinates sucrose. Residues 151 to 182 are Cytoplasmic-facing; that stretch reads KWPAVVRIWTRTEIPFTKPPYEIPKRNLSRRV. The helical transmembrane segment at 183–205 threads the bilayer; that stretch reads QLAALAIIGLSLGEHALYQVSAI. Residues E196, H197, and Y234 each contribute to the sucrose site. The D-maltose site is built by E196, H197, Y234, N253, and T257. Residues 206-245 lie on the Extracellular side of the membrane; that stretch reads LSYTRRIQMCANITTVPSFNNYMQTNYDYVFQLLPYSPII. Residues 246–271 form a helical membrane-spanning segment; that stretch reads AVLILLINGACTFVWNYMDLFIMMIS. Residue T257 coordinates sucrose. The Cytoplasmic segment spans residues 272-318; that stretch reads KGLSYRFEQITTRIRKLEHEEVCESVFIQIREHYVKMCELLEFVDSA. Residues 319-342 traverse the membrane as a helical segment; that stretch reads MSSLILLSCVNNLYFVCYQLLNVF. The Extracellular portion of the chain corresponds to 343–350; sequence NKLRWPIN. The chain crosses the membrane as a helical span at residues 351 to 373; sequence YIYFWYSLLYLIGRTAFVFLTAA. Y353 contacts sucrose. D-maltose is bound at residue Y353. The Cytoplasmic segment spans residues 374–421; that stretch reads DINEESKRGLGVLRRVSSRSWCVEVERLIFQMTTQTVALSGKKFYFLT. The chain crosses the membrane as a helical span at residues 422-441; it reads RRLLFGMAGTIVTYELVLLQ. Residues 442–456 lie on the Extracellular side of the membrane; the sequence is FDEPNRRKGLQPLCA.

Belongs to the insect chemoreceptor superfamily. Gustatory receptor (GR) family. Gr5a subfamily. Homotetramer. As to expression, expressed in Gr5a-expressing sugar-sensing cells.

It localises to the cell membrane. One of the few identified sugar gustatory receptors identified so far and which promotes the starvation-induced increase of feeding motivation. Required in combination with Gr64f to detect sucrose, maltose, and glucose. This is Gustatory receptor for sugar taste 64a (Gr64a) from Drosophila melanogaster (Fruit fly).